Here is a 235-residue protein sequence, read N- to C-terminus: MKLTSPIFNDQQKRRAIIWLSFFHIFIIAASNYFVQIPFEITLKLTALGAANDFSFHSTWGTLTFPFIFLATDLTVRIFGAEDARKIIFVVMFPALIVSYVISVLFSESKFQGFESLTHFDLFVFRIAIASFAAYVVGQLLDVIVFNRLRQLKTWWVAPTSSMTFGSMADTFVFFSIAFYQSADPFMAEHWAQLGFVDYLFKLFIGIILFVPAYGVVLNVILRKLQMLVTERVPA.

6 helical membrane passes run 17-37 (IIWLSFFHIFIIAASNYFVQI), 56-76 (FHSTWGTLTFPFIFLATDLTV), 87-107 (IIFVVMFPALIVSYVISVLFS), 127-147 (IAIASFAAYVVGQLLDVIVFN), 155-175 (WWVAPTSSMTFGSMADTFVFF), and 201-221 (FKLFIGIILFVPAYGVVLNVI).

This sequence belongs to the vitamin uptake transporter (VUT/ECF) (TC 2.A.88) family. Q precursor transporter subfamily.

Its subcellular location is the cell inner membrane. Functionally, involved in the import of queuosine (Q) precursors, required for Q precursor salvage. The polypeptide is Probable queuosine precursor transporter (Haemophilus influenzae (strain ATCC 51907 / DSM 11121 / KW20 / Rd)).